Consider the following 385-residue polypeptide: Putative nickel insertion protein (385 aa).

Belongs to the LarC family.

This Citrifermentans bemidjiense (strain ATCC BAA-1014 / DSM 16622 / JCM 12645 / Bem) (Geobacter bemidjiensis) protein is Putative nickel insertion protein.